Reading from the N-terminus, the 489-residue chain is N-succinylglutamate 5-semialdehyde dehydrogenase (489 aa).

223 to 228 (GSSNTG) contributes to the NAD(+) binding site. Catalysis depends on residues glutamate 246 and cysteine 280.

It belongs to the aldehyde dehydrogenase family. AstD subfamily.

It catalyses the reaction N-succinyl-L-glutamate 5-semialdehyde + NAD(+) + H2O = N-succinyl-L-glutamate + NADH + 2 H(+). The protein operates within amino-acid degradation; L-arginine degradation via AST pathway; L-glutamate and succinate from L-arginine: step 4/5. Its function is as follows. Catalyzes the NAD-dependent reduction of succinylglutamate semialdehyde into succinylglutamate. This chain is N-succinylglutamate 5-semialdehyde dehydrogenase, found in Idiomarina loihiensis (strain ATCC BAA-735 / DSM 15497 / L2-TR).